Consider the following 513-residue polypeptide: Probable E3 ubiquitin-protein ligase XBOS34 (513 aa).

3 ANK repeats span residues 39 to 69, 75 to 104, and 108 to 137; these read EGKT…NVNA, YCGT…NPFI, and DCHT…LFCG. Composition is skewed to polar residues over residues 309–327 and 335–355; these read ITTT…NSLN and SAPS…STYN. Disordered regions lie at residues 309-378 and 423-455; these read ITTT…QNST and SADG…SNSG. Low complexity predominate over residues 361–378; it reads GTSSGQSSSKHNKSQNST. Residues 436–446 show a composition bias toward basic and acidic residues; the sequence is AENEGDAKPAE. Residues 462–501 form an RING-type zinc finger; the sequence is CVICLDAPVEGACIPCGHMAGCMSCLKDIESKKWGCPICR.

It catalyses the reaction S-ubiquitinyl-[E2 ubiquitin-conjugating enzyme]-L-cysteine + [acceptor protein]-L-lysine = [E2 ubiquitin-conjugating enzyme]-L-cysteine + N(6)-ubiquitinyl-[acceptor protein]-L-lysine.. The protein operates within protein modification; protein ubiquitination. The chain is Probable E3 ubiquitin-protein ligase XBOS34 (XBOS34) from Oryza sativa subsp. japonica (Rice).